The chain runs to 475 residues: ATP synthase subunit beta (475 aa).

G155–T162 contacts ATP.

Belongs to the ATPase alpha/beta chains family. In terms of assembly, F-type ATPases have 2 components, CF(1) - the catalytic core - and CF(0) - the membrane proton channel. CF(1) has five subunits: alpha(3), beta(3), gamma(1), delta(1), epsilon(1). CF(0) has three main subunits: a(1), b(2) and c(9-12). The alpha and beta chains form an alternating ring which encloses part of the gamma chain. CF(1) is attached to CF(0) by a central stalk formed by the gamma and epsilon chains, while a peripheral stalk is formed by the delta and b chains.

It is found in the cell inner membrane. It catalyses the reaction ATP + H2O + 4 H(+)(in) = ADP + phosphate + 5 H(+)(out). In terms of biological role, produces ATP from ADP in the presence of a proton gradient across the membrane. The catalytic sites are hosted primarily by the beta subunits. This chain is ATP synthase subunit beta, found in Rhizobium etli (strain ATCC 51251 / DSM 11541 / JCM 21823 / NBRC 15573 / CFN 42).